The following is a 251-amino-acid chain: Ubiquinone/menaquinone biosynthesis C-methyltransferase UbiE (251 aa).

S-adenosyl-L-methionine-binding positions include T74, D95, and 123 to 124 (NA).

Belongs to the class I-like SAM-binding methyltransferase superfamily. MenG/UbiE family.

The enzyme catalyses a 2-demethylmenaquinol + S-adenosyl-L-methionine = a menaquinol + S-adenosyl-L-homocysteine + H(+). It carries out the reaction a 2-methoxy-6-(all-trans-polyprenyl)benzene-1,4-diol + S-adenosyl-L-methionine = a 5-methoxy-2-methyl-3-(all-trans-polyprenyl)benzene-1,4-diol + S-adenosyl-L-homocysteine + H(+). Its pathway is quinol/quinone metabolism; menaquinone biosynthesis; menaquinol from 1,4-dihydroxy-2-naphthoate: step 2/2. It functions in the pathway cofactor biosynthesis; ubiquinone biosynthesis. Methyltransferase required for the conversion of demethylmenaquinol (DMKH2) to menaquinol (MKH2) and the conversion of 2-polyprenyl-6-methoxy-1,4-benzoquinol (DDMQH2) to 2-polyprenyl-3-methyl-6-methoxy-1,4-benzoquinol (DMQH2). The polypeptide is Ubiquinone/menaquinone biosynthesis C-methyltransferase UbiE (Erwinia tasmaniensis (strain DSM 17950 / CFBP 7177 / CIP 109463 / NCPPB 4357 / Et1/99)).